Consider the following 232-residue polypeptide: MPSQQKKIIFCMAGVFSFACALGVVTALGTPLWIKATVLCKTGALLVNASGQELDKFMGEMQYGLFHGEGVRQCGLGARPFRFSFFPDLLKAIPVSIHVNIILFSMILVVLTMVGTAFFMYNAFGKPFESLHGPLGLYLVSFISGSCGCLVMILFASEVKIHRLSEKIANFKEGTYAYKTQNENYTTSFWVVFICFFVHFLNGLLIRLAGFQFPFTKSKETETTNVASDLMY.

Residues 8-28 form a helical membrane-spanning segment; the sequence is IIFCMAGVFSFACALGVVTAL. N48 carries N-linked (GlcNAc...) asparagine glycosylation. Helical transmembrane passes span 101–121 and 135–155; these read IILFSMILVVLTMVGTAFFMY and LGLYLVSFISGSCGCLVMILF. N-linked (GlcNAc...) asparagine glycosylation occurs at N184. A helical transmembrane segment spans residues 186-206; sequence TTSFWVVFICFFVHFLNGLLI.

The protein belongs to the clarin family.

It localises to the cell membrane. May have a role in the excitatory ribbon synapse junctions between hair cells and cochlear ganglion cells and presumably also in analogous synapses within the retina. The protein is Clarin-1 (Clrn1) of Rattus norvegicus (Rat).